Reading from the N-terminus, the 203-residue chain is Selenocysteine-containing peroxiredoxin PrxU (203 aa).

Residues 2–160 (VSVGKKAPDF…TLRQIQAFQL (159 aa)) enclose the Thioredoxin domain. The active site involves U47. U47 is a non-standard amino acid (selenocysteine).

It belongs to the peroxiredoxin family. AhpC/Prx1 subfamily.

The catalysed reaction is a hydroperoxide + [thioredoxin]-dithiol = an alcohol + [thioredoxin]-disulfide + H2O. Functionally, thiol-specific peroxidase that catalyzes the reduction of hydrogen peroxide and organic hydroperoxides to water and alcohols, respectively. Plays a role in cell protection against oxidative stress by detoxifying peroxides. In Peptoclostridium acidaminophilum (Eubacterium acidaminophilum), this protein is Selenocysteine-containing peroxiredoxin PrxU.